A 523-amino-acid polypeptide reads, in one-letter code: Flavonoid 3',5'-hydroxylase (523 aa).

Residue Cys-460 participates in heme binding.

The protein belongs to the cytochrome P450 family. Heme is required as a cofactor.

It carries out the reaction a 3',5'-unsubstituted flavanone + 2 reduced [NADPH--hemoprotein reductase] + 2 O2 = a 3',5'-dihydroxyflavanone + 2 oxidized [NADPH--hemoprotein reductase] + 2 H2O + 2 H(+). The protein operates within pigment biosynthesis; anthocyanin biosynthesis. Its function is as follows. Catalyzes the 3'5'-hydroxylation of naringenin and eriodictyol to form 5,7,3,'4',5'-pentahydroxyflavanone and 3',5'-hydroxylation of dihydrokaempferol and dihydroquercetin to form dihydromyricetin. The polypeptide is Flavonoid 3',5'-hydroxylase (CYP75A6) (Campanula medium (Canterbury bells)).